A 131-amino-acid polypeptide reads, in one-letter code: Small ribosomal subunit protein uS11 (131 aa).

This sequence belongs to the universal ribosomal protein uS11 family. Part of the 30S ribosomal subunit. Interacts with proteins S7 and S18. Binds to IF-3.

In terms of biological role, located on the platform of the 30S subunit, it bridges several disparate RNA helices of the 16S rRNA. Forms part of the Shine-Dalgarno cleft in the 70S ribosome. This Cellvibrio japonicus (strain Ueda107) (Pseudomonas fluorescens subsp. cellulosa) protein is Small ribosomal subunit protein uS11.